A 92-amino-acid polypeptide reads, in one-letter code: Small ribosomal subunit protein uS19 (92 aa).

The protein belongs to the universal ribosomal protein uS19 family.

Protein S19 forms a complex with S13 that binds strongly to the 16S ribosomal RNA. This is Small ribosomal subunit protein uS19 from Parvibaculum lavamentivorans (strain DS-1 / DSM 13023 / NCIMB 13966).